An 860-amino-acid chain; its full sequence is Valine--tRNA ligase (860 aa).

Positions 53–63 (PNLTGILHIGH) match the 'HIGH' region motif. The 'KMSKS' region signature appears at 527–531 (KMSKS). Position 530 (Lys530) interacts with ATP. Residues 794–860 (QDKTKIVDKL…LKQDKLNSLK (67 aa)) adopt a coiled-coil conformation.

Belongs to the class-I aminoacyl-tRNA synthetase family. ValS type 1 subfamily. In terms of assembly, monomer.

It is found in the cytoplasm. It carries out the reaction tRNA(Val) + L-valine + ATP = L-valyl-tRNA(Val) + AMP + diphosphate. In terms of biological role, catalyzes the attachment of valine to tRNA(Val). As ValRS can inadvertently accommodate and process structurally similar amino acids such as threonine, to avoid such errors, it has a 'posttransfer' editing activity that hydrolyzes mischarged Thr-tRNA(Val) in a tRNA-dependent manner. The chain is Valine--tRNA ligase from Mycoplasmoides gallisepticum (strain R(low / passage 15 / clone 2)) (Mycoplasma gallisepticum).